The following is a 351-amino-acid chain: Photosystem II D2 protein (351 aa).

The chain crosses the membrane as a helical span at residues 39-59 (TAYLAAGGWFTGTTFVTSWYT). Position 116 (histidine 116) interacts with chlorophyll a. The helical transmembrane segment at 123 to 139 (GFCLRQFEIARLVGIRP) threads the bilayer. Positions 128 and 141 each coordinate pheophytin a. The helical transmembrane segment at 151-164 (VFVSVFLLYPLGQA) threads the bilayer. Histidine 196 lines the chlorophyll a pocket. Residues 206–226 (GALLCAIHGATVENTLFEDGD) form a helical membrane-spanning segment. A plastoquinone contacts are provided by histidine 213 and phenylalanine 260. Residue histidine 213 coordinates Fe cation. Histidine 267 serves as a coordination point for Fe cation. Residues 277-293 (GLWTSSIGIVGLALNLR) form a helical membrane-spanning segment.

The protein belongs to the reaction center PufL/M/PsbA/D family. PSII is composed of 1 copy each of membrane proteins PsbA, PsbB, PsbC, PsbD, PsbE, PsbF, PsbH, PsbI, PsbJ, PsbK, PsbL, PsbM, PsbT, PsbX, PsbY, PsbZ, Psb30/Ycf12, at least 3 peripheral proteins of the oxygen-evolving complex and a large number of cofactors. It forms dimeric complexes. It depends on The D1/D2 heterodimer binds P680, chlorophylls that are the primary electron donor of PSII, and subsequent electron acceptors. It shares a non-heme iron and each subunit binds pheophytin, quinone, additional chlorophylls, carotenoids and lipids. There is also a Cl(-1) ion associated with D1 and D2, which is required for oxygen evolution. The PSII complex binds additional chlorophylls, carotenoids and specific lipids. as a cofactor.

It localises to the plastid. The protein resides in the chloroplast thylakoid membrane. The enzyme catalyses 2 a plastoquinone + 4 hnu + 2 H2O = 2 a plastoquinol + O2. Its function is as follows. Photosystem II (PSII) is a light-driven water:plastoquinone oxidoreductase that uses light energy to abstract electrons from H(2)O, generating O(2) and a proton gradient subsequently used for ATP formation. It consists of a core antenna complex that captures photons, and an electron transfer chain that converts photonic excitation into a charge separation. The D1/D2 (PsbA/PsbD) reaction center heterodimer binds P680, the primary electron donor of PSII as well as several subsequent electron acceptors. D2 is needed for assembly of a stable PSII complex. The chain is Photosystem II D2 protein from Thalassiosira pseudonana (Marine diatom).